Consider the following 467-residue polypeptide: Putative gluconeogenesis factor (467 aa).

A compositionally biased stretch (pro residues) spans 1 to 12 (MSAPPAPPPDRS). The segment at 1–27 (MSAPPAPPPDRSAPPDRTDSAQTEPTR) is disordered.

It belongs to the gluconeogenesis factor family.

It is found in the cytoplasm. In terms of biological role, required for morphogenesis under gluconeogenic growth conditions. This Deinococcus radiodurans (strain ATCC 13939 / DSM 20539 / JCM 16871 / CCUG 27074 / LMG 4051 / NBRC 15346 / NCIMB 9279 / VKM B-1422 / R1) protein is Putative gluconeogenesis factor.